Reading from the N-terminus, the 396-residue chain is CCA-adding enzyme (396 aa).

ATP is bound by residues glycine 27 and arginine 30. Positions 27 and 30 each coordinate CTP. Aspartate 40 and aspartate 42 together coordinate Mg(2+). Positions 111, 154, 157, 160, and 163 each coordinate ATP. Residues arginine 111, aspartate 154, arginine 157, arginine 160, and arginine 163 each contribute to the CTP site.

The protein belongs to the tRNA nucleotidyltransferase/poly(A) polymerase family. Bacterial CCA-adding enzyme type 3 subfamily. In terms of assembly, homodimer. The cofactor is Mg(2+).

The enzyme catalyses a tRNA precursor + 2 CTP + ATP = a tRNA with a 3' CCA end + 3 diphosphate. It carries out the reaction a tRNA with a 3' CCA end + 2 CTP + ATP = a tRNA with a 3' CCACCA end + 3 diphosphate. Functionally, catalyzes the addition and repair of the essential 3'-terminal CCA sequence in tRNAs without using a nucleic acid template. Adds these three nucleotides in the order of C, C, and A to the tRNA nucleotide-73, using CTP and ATP as substrates and producing inorganic pyrophosphate. tRNA 3'-terminal CCA addition is required both for tRNA processing and repair. Also involved in tRNA surveillance by mediating tandem CCA addition to generate a CCACCA at the 3' terminus of unstable tRNAs. While stable tRNAs receive only 3'-terminal CCA, unstable tRNAs are marked with CCACCA and rapidly degraded. The polypeptide is CCA-adding enzyme (Pediococcus pentosaceus (strain ATCC 25745 / CCUG 21536 / LMG 10740 / 183-1w)).